An 81-amino-acid chain; its full sequence is MLELHFEFIDLNQPKMYKFVVCLLTLSFLLLSGLSNTALARVHHESSNPKIGNRVWDQKIFNNVKVRVLPSASRRGPGQTG.

The signal sequence occupies residues 1 to 40 (MLELHFEFIDLNQPKMYKFVVCLLTLSFLLLSGLSNTALA). The SCOOP motif signature appears at 65 to 79 (KVRVLPSASRRGPGQ). Positions 71-73 (SAS) match the SxS motif essential for MIK2 binding motif.

This sequence belongs to the serine rich endogenous peptide (SCOOP) phytocytokine family. As to quaternary structure, interacts with MIK2 (via extracellular leucine-rich repeat domain); this interaction triggers the formation of complex between MIK2 and the BAK1/SERK3 and SERK4 coreceptors, and subsequent BAK1 activation by phosphorylation.

Its subcellular location is the cell membrane. The protein resides in the secreted. It localises to the extracellular space. The protein localises to the apoplast. In terms of biological role, brassicaceae-specific phytocytokine (plant endogenous peptide released into the apoplast) perceived by MIK2 in a BAK1/SERK3 and SERK4 coreceptors-dependent manner, that modulates various physiological and antimicrobial processes including growth prevention and reactive oxygen species (ROS) response regulation. This is Serine rich endogenous peptide 21 from Arabidopsis thaliana (Mouse-ear cress).